The primary structure comprises 228 residues: Cytidylate kinase (228 aa).

17 to 25 (GPTASGKGT) serves as a coordination point for ATP.

The protein belongs to the cytidylate kinase family. Type 1 subfamily.

Its subcellular location is the cytoplasm. The enzyme catalyses CMP + ATP = CDP + ADP. It carries out the reaction dCMP + ATP = dCDP + ADP. The protein is Cytidylate kinase of Burkholderia ambifaria (strain ATCC BAA-244 / DSM 16087 / CCUG 44356 / LMG 19182 / AMMD) (Burkholderia cepacia (strain AMMD)).